The chain runs to 821 residues: DNA replication licensing factor MCM6 (821 aa).

Methionine 1 carries the N-acetylmethionine modification. Phosphoserine is present on residues serine 13, serine 219, and serine 271. Residue threonine 278 is modified to Phosphothreonine. An MCM domain is found at 346-553 (LYHNLCTSLF…TDYAIARRIV (208 aa)). 7 residues coordinate ATP: histidine 359, serine 399, threonine 400, alanine 401, lysine 402, serine 403, and asparagine 504. Positions 528–531 (SRFD) match the Arginine finger motif. ADP is bound by residues arginine 619 and glutamate 622. Lysine 643 is subject to N6-acetyllysine. The tract at residues 676 to 706 (VDEGPDGINGHADSPAPASGINGHSEDMNQD) is disordered. 2 positions are modified to phosphoserine: serine 689 and serine 762. Position 791 is a phosphothreonine (threonine 791).

This sequence belongs to the MCM family. As to quaternary structure, component of the MCM2-7 complex. The complex forms a toroidal hexameric ring with the proposed subunit order MCM2-MCM6-MCM4-MCM7-MCM3-MCM5. Component of the CMG helicase complex, a hexameric ring of related MCM2-7 subunits stabilized by CDC45 and the tetrameric GINS complex. May interact with MCM10. Interacts with TIPIN. Interacts with CDT1. Interacts with MCMBP. Interacts with DDI2. In terms of processing, O-glycosylated (O-GlcNAcylated), in a cell cycle-dependent manner.

It is found in the nucleus. The protein localises to the chromosome. It catalyses the reaction ATP + H2O = ADP + phosphate + H(+). Functionally, acts as a component of the MCM2-7 complex (MCM complex) which is the replicative helicase essential for 'once per cell cycle' DNA replication initiation and elongation in eukaryotic cells. Core component of CDC45-MCM-GINS (CMG) helicase, the molecular machine that unwinds template DNA during replication, and around which the replisome is built. The active ATPase sites in the MCM2-7 ring are formed through the interaction surfaces of two neighboring subunits such that a critical structure of a conserved arginine finger motif is provided in trans relative to the ATP-binding site of the Walker A box of the adjacent subunit. The six ATPase active sites, however, are likely to contribute differentially to the complex helicase activity. The protein is DNA replication licensing factor MCM6 (MCM6) of Bos taurus (Bovine).